Consider the following 992-residue polypeptide: Vacuolar membrane protease (992 aa).

The Cytoplasmic portion of the chain corresponds to 1-24; it reads MSPAMANPRVRKFNPIAFTPLPVT. A helical membrane pass occupies residues 25-45; it reads FITTIVYLAVLILVLVTYLVV. Residues 46–390 are Vacuolar-facing; it reads PPAPTLEMSP…SAFAVFRLHT (345 aa). Residues asparagine 59, asparagine 115, and asparagine 118 are each glycosylated (N-linked (GlcNAc...) asparagine). 2 residues coordinate Zn(2+): histidine 174 and aspartate 186. Glutamate 220 acts as the Proton acceptor in catalysis. Zn(2+) is bound at residue glutamate 221. A glycan (N-linked (GlcNAc...) asparagine) is linked at asparagine 237. Zn(2+) is bound by residues glutamate 246 and histidine 319. Residues 391–411 form a helical membrane-spanning segment; that stretch reads LFALSVTLLVIGPLVLFITSI. At 412–446 the chain is on the cytoplasmic side; that stretch reads ALSKTDRMYLFSMSKSLGGASETVSLRGLRGLFRT. A helical transmembrane segment spans residues 447–467; it reads PIILTVTTVISIGLAYLLEKI. Topologically, residues 468–474 are vacuolar; that stretch reads NPYIVHS. The chain crosses the membrane as a helical span at residues 475–495; the sequence is SQFAVWSMMLSVWIFVAWFLA. Topologically, residues 496–508 are cytoplasmic; it reads RVADFFRPSALHR. Residues 509–529 traverse the membrane as a helical segment; that stretch reads AYSYTWIFIVTWIMLVISTVY. Residues 530–533 are Vacuolar-facing; the sequence is ANQK. A helical membrane pass occupies residues 534 to 554; sequence GIAAGYFTFFYFAAVFLATWV. Topologically, residues 555–671 are cytoplasmic; that stretch reads SYLELFSLPR…WSWTLPRWTW (117 aa). The tract at residues 579–620 is disordered; sequence RSSSLSSRLLTPSADELPSDIGPNGAENVGDPDETDPTESTS. A helical membrane pass occupies residues 672 to 692; the sequence is ILQLLLLAPIVIILVGQVGLL. Residues 693–708 lie on the Vacuolar side of the membrane; that stretch reads LTTAMSQIGSDGVSTF. A helical transmembrane segment spans residues 709–729; the sequence is IVYLACALFSTLLFAPLLPFI. Over 730 to 736 the chain is Cytoplasmic; it reads HRFTYHV. Residues 737 to 757 form a helical membrane-spanning segment; that stretch reads PIFLLLIFIGTLIYNLVAFPF. At 758-992 the chain is on the vacuolar side; the sequence is SPANRLKIFF…VEASHDFIIQ (235 aa). N-linked (GlcNAc...) asparagine glycans are attached at residues asparagine 805, asparagine 846, and asparagine 954.

It belongs to the peptidase M28 family. Zn(2+) serves as cofactor.

The protein localises to the vacuole membrane. In terms of biological role, may be involved in vacuolar sorting and osmoregulation. This chain is Vacuolar membrane protease, found in Paracoccidioides brasiliensis (strain Pb18).